Here is a 132-residue protein sequence, read N- to C-terminus: Hemoglobin heart muscle subunit alpha-type (132 aa).

The Globin domain occupies glycine 1 to serine 132. Heme b is bound by residues histidine 58 and histidine 83.

The protein belongs to the globin family. In terms of assembly, monomer.

Functionally, this hemoglobin may replace myocardial myoglobin in this amphibian species. This is Hemoglobin heart muscle subunit alpha-type from Aquarana catesbeiana (American bullfrog).